We begin with the raw amino-acid sequence, 279 residues long: Digeranylgeranylglyceryl phosphate synthase (279 aa).

8 helical membrane passes run Gly5–Ala25, Leu27–Val47, Phe90–Val110, Phe127–Tyr147, Ala148–Leu168, Lys198–Tyr218, Leu219–Ala239, and Thr259–Leu279.

It belongs to the UbiA prenyltransferase family. DGGGP synthase subfamily. It depends on Mg(2+) as a cofactor.

It localises to the cell membrane. The catalysed reaction is sn-3-O-(geranylgeranyl)glycerol 1-phosphate + (2E,6E,10E)-geranylgeranyl diphosphate = 2,3-bis-O-(geranylgeranyl)-sn-glycerol 1-phosphate + diphosphate. The protein operates within membrane lipid metabolism; glycerophospholipid metabolism. Prenyltransferase that catalyzes the transfer of the geranylgeranyl moiety of geranylgeranyl diphosphate (GGPP) to the C2 hydroxyl of (S)-3-O-geranylgeranylglyceryl phosphate (GGGP). This reaction is the second ether-bond-formation step in the biosynthesis of archaeal membrane lipids. The chain is Digeranylgeranylglyceryl phosphate synthase from Methanoregula boonei (strain DSM 21154 / JCM 14090 / 6A8).